We begin with the raw amino-acid sequence, 336 residues long: Dihydroorotate dehydrogenase (quinone) (336 aa).

Residues 62 to 66 (AGLDK) and threonine 86 contribute to the FMN site. Lysine 66 serves as a coordination point for substrate. 111–115 (NRMGF) is a binding site for substrate. FMN-binding residues include asparagine 139 and asparagine 172. Asparagine 172 provides a ligand contact to substrate. Residue serine 175 is the Nucleophile of the active site. Residue asparagine 177 coordinates substrate. Lysine 217 and threonine 245 together coordinate FMN. Substrate is bound at residue 246-247 (NT). Residues glycine 268, glycine 297, and 318 to 319 (YT) each bind FMN.

This sequence belongs to the dihydroorotate dehydrogenase family. Type 2 subfamily. As to quaternary structure, monomer. Requires FMN as cofactor.

It is found in the cell membrane. It catalyses the reaction (S)-dihydroorotate + a quinone = orotate + a quinol. Its pathway is pyrimidine metabolism; UMP biosynthesis via de novo pathway; orotate from (S)-dihydroorotate (quinone route): step 1/1. Catalyzes the conversion of dihydroorotate to orotate with quinone as electron acceptor. The chain is Dihydroorotate dehydrogenase (quinone) from Pseudoalteromonas translucida (strain TAC 125).